Reading from the N-terminus, the 250-residue chain is MKYIDEIQILGKCSEGMSPAEVYKCQLKNTVCYLKKIDDIFSKTTYSVKREAEMMMWLSDKLKVPDVIEYGVREHSEYLIMSELRGKHIDCFIDHPIKYIECLVNALHQLQAIDIRNCPFSSKIDVRLKELKYLLDNRIADIDVSNWEDTTEFDDPMTLYQWLCENQPQEELCLSHGDMSANFFVSHDGIYFYDLARCGVADKWLDIAFCVREIREYYPDSDYEKFFFNMLGLEPDYKKINYYILLDEMF.

The Proton acceptor role is filled by aspartate 178.

It belongs to the aminoglycoside phosphotransferase family.

It catalyses the reaction kanamycin A + ATP = kanamycin 3'-phosphate + ADP + H(+). Its function is as follows. Resistance to kanamycin and structurally-related aminoglycosides, including amikacin. This chain is Aminoglycoside 3'-phosphotransferase (aphA-7), found in Campylobacter jejuni.